The sequence spans 275 residues: Structure-specific endonuclease subunit SLX1 (275 aa).

The GIY-YIG domain occupies Arg12 to Ala95. Positions His148 to Pro161 are enriched in pro residues. The disordered stretch occupies residues His148–Gln179. An SLX1-type zinc finger spans residues Cys186 to Cys238.

It belongs to the SLX1 family. Forms a heterodimer with SLX4. A divalent metal cation is required as a cofactor.

Its subcellular location is the nucleus. In terms of biological role, catalytic subunit of the SLX1-SLX4 structure-specific endonuclease that resolves DNA secondary structures generated during DNA repair and recombination. Has endonuclease activity towards branched DNA substrates, introducing single-strand cuts in duplex DNA close to junctions with ss-DNA. Has a preference for 5'-flap structures, and promotes symmetrical cleavage of static and migrating Holliday junctions (HJs). Resolves HJs by generating two pairs of ligatable, nicked duplex products. The sequence is that of Structure-specific endonuclease subunit SLX1 from Homo sapiens (Human).